Here is a 538-residue protein sequence, read N- to C-terminus: Cytochrome P450 18a1 (538 aa).

Residues 24 to 44 form a helical membrane-spanning segment; that stretch reads QHLLMVFLGLLALVTLLQWLV. Residue C466 coordinates heme.

The protein belongs to the cytochrome P450 family. It depends on heme as a cofactor. In terms of tissue distribution, expressed in body wall (epidermal and muscle cells) and mid- and hind-gut.

It is found in the endoplasmic reticulum membrane. Its subcellular location is the microsome membrane. In terms of biological role, probably involved in steroid hormones biosynthesis. The polypeptide is Cytochrome P450 18a1 (Cyp18a1) (Drosophila melanogaster (Fruit fly)).